Reading from the N-terminus, the 385-residue chain is Transmembrane protein 271 (385 aa).

2 consecutive transmembrane segments (helical) span residues 9 to 29 (CAAL…AVGL) and 50 to 70 (GAFY…AALL). The disordered stretch occupies residues 83–111 (EPGPGLGVPAAPAGAPEATPGESGAAAGA). A helical transmembrane segment spans residues 121–141 (LLLGVLVFMLGVLSAFAGAVI). The interval 160 to 203 (PRAPGSSPGSAPGSTPGSAPGSAPGSAPGSAPGAPRARSTLDSA) is disordered. Low complexity predominate over residues 163–197 (PGSSPGSAPGSTPGSAPGSAPGSAPGSAPGAPRAR). The helical transmembrane segment at 219-239 (VLSTVFNSLECLLGLLSLLLV) threads the bilayer. The disordered stretch occupies residues 245 to 305 (SQARRGRRGR…SEASILSPEE (61 aa)). Residues 246–258 (QARRGRRGRRRGG) show a composition bias toward basic residues. Positions 259-277 (RALARPRGGSGLRAQPPAS) are enriched in low complexity. The span at 278–292 (RARRGRRGRRGRRLQ) shows a compositional bias: basic residues.

The protein resides in the membrane. This is Transmembrane protein 271 from Homo sapiens (Human).